The sequence spans 218 residues: Octanoyltransferase (218 aa).

Residues 31–206 (EETPDEVWLV…ELVNLLGYEQ (176 aa)) enclose the BPL/LPL catalytic domain. Substrate-binding positions include 70-77 (RGGQVTYH), 137-139 (SLG), and 150-152 (GLA). The active-site Acyl-thioester intermediate is cysteine 168.

This sequence belongs to the LipB family.

It localises to the cytoplasm. The enzyme catalyses octanoyl-[ACP] + L-lysyl-[protein] = N(6)-octanoyl-L-lysyl-[protein] + holo-[ACP] + H(+). It functions in the pathway protein modification; protein lipoylation via endogenous pathway; protein N(6)-(lipoyl)lysine from octanoyl-[acyl-carrier-protein]: step 1/2. Its function is as follows. Catalyzes the transfer of endogenously produced octanoic acid from octanoyl-acyl-carrier-protein onto the lipoyl domains of lipoate-dependent enzymes. Lipoyl-ACP can also act as a substrate although octanoyl-ACP is likely to be the physiological substrate. The chain is Octanoyltransferase from Vibrio vulnificus (strain CMCP6).